The sequence spans 257 residues: 3-deoxy-manno-octulosonate cytidylyltransferase (257 aa).

The protein belongs to the KdsB family.

The protein localises to the cytoplasm. It catalyses the reaction 3-deoxy-alpha-D-manno-oct-2-ulosonate + CTP = CMP-3-deoxy-beta-D-manno-octulosonate + diphosphate. The protein operates within nucleotide-sugar biosynthesis; CMP-3-deoxy-D-manno-octulosonate biosynthesis; CMP-3-deoxy-D-manno-octulosonate from 3-deoxy-D-manno-octulosonate and CTP: step 1/1. Its pathway is bacterial outer membrane biogenesis; lipopolysaccharide biosynthesis. Functionally, activates KDO (a required 8-carbon sugar) for incorporation into bacterial lipopolysaccharide in Gram-negative bacteria. This chain is 3-deoxy-manno-octulosonate cytidylyltransferase, found in Xylella fastidiosa (strain M12).